Reading from the N-terminus, the 162-residue chain is SsrA-binding protein (162 aa).

Residues 137-154 show a composition bias toward basic and acidic residues; it reads HDKREDTKAREWDREKAR. The segment at 137–162 is disordered; sequence HDKREDTKAREWDREKARIMKNKHRG.

The protein belongs to the SmpB family.

It is found in the cytoplasm. Its function is as follows. Required for rescue of stalled ribosomes mediated by trans-translation. Binds to transfer-messenger RNA (tmRNA), required for stable association of tmRNA with ribosomes. tmRNA and SmpB together mimic tRNA shape, replacing the anticodon stem-loop with SmpB. tmRNA is encoded by the ssrA gene; the 2 termini fold to resemble tRNA(Ala) and it encodes a 'tag peptide', a short internal open reading frame. During trans-translation Ala-aminoacylated tmRNA acts like a tRNA, entering the A-site of stalled ribosomes, displacing the stalled mRNA. The ribosome then switches to translate the ORF on the tmRNA; the nascent peptide is terminated with the 'tag peptide' encoded by the tmRNA and targeted for degradation. The ribosome is freed to recommence translation, which seems to be the essential function of trans-translation. This chain is SsrA-binding protein, found in Aeromonas salmonicida (strain A449).